The chain runs to 181 residues: Putative manganese efflux pump MntP (181 aa).

5 helical membrane-spanning segments follow: residues 35 to 55 (IIFG…GSIA), 59 to 79 (VADW…LLMI), 102 to 122 (AATG…LAFI), 126 to 146 (ILIT…LGVM), and 161 to 181 (ILGG…HLTM).

The protein belongs to the MntP (TC 9.B.29) family.

The protein resides in the cell inner membrane. Probably functions as a manganese efflux pump. This chain is Putative manganese efflux pump MntP, found in Nitrosomonas eutropha (strain DSM 101675 / C91 / Nm57).